A 124-amino-acid chain; its full sequence is Fluoride-specific ion channel FluC (124 aa).

Transmembrane regions (helical) follow at residues 1-21 (MIGV…LRFA), 34-54 (FYAA…YLYG), 62-82 (VPLA…TTFS), and 101-121 (FSYL…GLIL). Na(+)-binding residues include glycine 76 and threonine 79.

This sequence belongs to the fluoride channel Fluc/FEX (TC 1.A.43) family.

It localises to the cell inner membrane. It catalyses the reaction fluoride(in) = fluoride(out). Its activity is regulated as follows. Na(+) is not transported, but it plays an essential structural role and its presence is essential for fluoride channel function. Its function is as follows. Fluoride-specific ion channel. Important for reducing fluoride concentration in the cell, thus reducing its toxicity. In Azotobacter vinelandii (strain DJ / ATCC BAA-1303), this protein is Fluoride-specific ion channel FluC.